The sequence spans 961 residues: MTDIEALKAITTESIDLENVPVEEVFQHLKCTKEGLTSNEVQERLTLFGYNKLEEKKESKILKFLGFMWNPLSWVMEAAALMAIGLAHGGGKPADYHDFVGIVVLLLINSTISFVEENNAGNAAAALMAQLAPKAKAVRDGKWNEIDAAELVPGDIVSIKLGDIIPADARLLEGDPLKIDQATLTGESLPVTKNPGASVYSGSTCKQGEIEAVVIATGVHTFFGKAAHLVDSTTHVGHFQKVLTAIGNFCICSIAVGMAIEIVVIYGLQKRGYRVGIDNLLVLLIGGIPIAMPTVLSVTMAIGAHRLAQQGAITKRMTAIEEMAGMDVLCSDKTGTLTLNKLSVDKNLIEVFKRGIDRDMAVLMAARAARLENQDAIDTAIVSMLSDPKEARAGIKELHFLPFSPANRRTALTYLDGEGKMHRVSKGAPEEILDMAHNKLEIKEKVHATIDKFAERGLRSLGLAYQEVPDGDVKGEGGPWDFVALLPLFDPPRHDSAQTIERALHLGVSVKMITGDQLAIAKETGRRLGMGTNMYPSSSLLSDNNTEGVSVDELIENADGFAGVFPEHKYEIVKRLQSRKHICGMTGDGVNDAPALKKADIGIAVDDATDAARGASDIVLTEPGLSVIISAVLTSRAIFQRMKNYTIYAVSITIRIVMGFMLLCVFWEFDFPPFMVLVIAILNDGTIMTISKDRVKPSPTPDCWKLKEIFATGVVLGAYLAIMTVVFFWAAYETNFFHNIFHVRNFNQHHFKMKDKKVAAHLNEQMASAVYLQVSTISQALIFVTRSRSWSFVERPGFLLVIAFLIAQLVASVISAMANWPFAGIRSIGWGWTGVIWIFNIVTYMLLDPIKFLVRYALSGKSWDRMVEGRTALTGKKNFGQEERMAAWATEKRTQHGLETGQKPVYERNSATELNNMAEEAKRRAEIARMRELQTLKGKVESAAKLKGYDLEDPNSNNYTI.

Residues 1 to 64 (MTDIEALKAI…EKKESKILKF (64 aa)) lie on the Cytoplasmic side of the membrane. A helical transmembrane segment spans residues 65-84 (LGFMWNPLSWVMEAAALMAI). The Extracellular segment spans residues 85–96 (GLAHGGGKPADY). A helical transmembrane segment spans residues 97-117 (HDFVGIVVLLLINSTISFVEE). At 118 to 246 (NNAGNAAAAL…GHFQKVLTAI (129 aa)) the chain is on the cytoplasmic side. A helical transmembrane segment spans residues 247 to 267 (GNFCICSIAVGMAIEIVVIYG). The Extracellular portion of the chain corresponds to 268-276 (LQKRGYRVG). Residues 277-294 (IDNLLVLLIGGIPIAMPT) form a helical membrane-spanning segment. Residues 295–643 (VLSVTMAIGA…TSRAIFQRMK (349 aa)) are Cytoplasmic-facing. Asp-332 serves as the catalytic 4-aspartylphosphate intermediate. The Mg(2+) site is built by Asp-588 and Asp-592. Residues 644 to 665 (NYTIYAVSITIRIVMGFMLLCV) traverse the membrane as a helical segment. At 666–670 (FWEFD) the chain is on the extracellular side. Residues 671-693 (FPPFMVLVIAILNDGTIMTISKD) form a helical membrane-spanning segment. The Cytoplasmic portion of the chain corresponds to 694 to 709 (RVKPSPTPDCWKLKEI). A helical membrane pass occupies residues 710-730 (FATGVVLGAYLAIMTVVFFWA). Over 731–764 (AYETNFFHNIFHVRNFNQHHFKMKDKKVAAHLNE) the chain is Extracellular. A helical transmembrane segment spans residues 765–785 (QMASAVYLQVSTISQALIFVT). The Cytoplasmic portion of the chain corresponds to 786–797 (RSRSWSFVERPG). The helical transmembrane segment at 798 to 818 (FLLVIAFLIAQLVASVISAMA) threads the bilayer. Over 819-826 (NWPFAGIR) the chain is Extracellular. The chain crosses the membrane as a helical span at residues 827 to 847 (SIGWGWTGVIWIFNIVTYMLL). The Cytoplasmic segment spans residues 848-961 (DPIKFLVRYA…EDPNSNNYTI (114 aa)). Thr-894 is modified (phosphothreonine). A phosphoserine mark is found at Ser-910 and Ser-942. The interval 959–961 (YTI) is interaction with 14-3-3 proteins. Thr-960 is modified (phosphothreonine).

This sequence belongs to the cation transport ATPase (P-type) (TC 3.A.3) family. Type IIIA subfamily. In terms of assembly, binds to 14-3-3 proteins. The binding is induced by phosphorylation of Thr-960. Binding to 14-3-3 proteins activates the H(+)-ATPase. In terms of tissue distribution, expressed in guard cells, roots and leaves, and barely in mesophyll cells.

The protein resides in the membrane. It catalyses the reaction ATP + H2O + H(+)(in) = ADP + phosphate + 2 H(+)(out). Its function is as follows. The plasma membrane H(+) ATPase of plants and fungi generates a proton gradient that drives the active transport of nutrients by H(+)-symport. The resulting external acidification and/or internal alkinization may mediate growth responses. The sequence is that of ATPase 7, plasma membrane-type (AHA7) from Arabidopsis thaliana (Mouse-ear cress).